A 144-amino-acid polypeptide reads, in one-letter code: Large ribosomal subunit protein uL16 (144 aa).

Positions 1 to 16 are enriched in basic residues; it reads MLTPKRVKHRKQHRGK. Residues 1 to 22 are disordered; it reads MLTPKRVKHRKQHRGKMAGNAK.

The protein belongs to the universal ribosomal protein uL16 family. Part of the 50S ribosomal subunit.

In terms of biological role, binds 23S rRNA and is also seen to make contacts with the A and possibly P site tRNAs. The sequence is that of Large ribosomal subunit protein uL16 from Brevibacillus brevis (strain 47 / JCM 6285 / NBRC 100599).